An 876-amino-acid chain; its full sequence is Alanine--tRNA ligase (876 aa).

Positions 562, 566, 666, and 670 each coordinate Zn(2+).

The protein belongs to the class-II aminoacyl-tRNA synthetase family. It depends on Zn(2+) as a cofactor.

The protein localises to the cytoplasm. The enzyme catalyses tRNA(Ala) + L-alanine + ATP = L-alanyl-tRNA(Ala) + AMP + diphosphate. In terms of biological role, catalyzes the attachment of alanine to tRNA(Ala) in a two-step reaction: alanine is first activated by ATP to form Ala-AMP and then transferred to the acceptor end of tRNA(Ala). Also edits incorrectly charged Ser-tRNA(Ala) and Gly-tRNA(Ala) via its editing domain. This is Alanine--tRNA ligase from Marinobacter nauticus (strain ATCC 700491 / DSM 11845 / VT8) (Marinobacter aquaeolei).